Reading from the N-terminus, the 735-residue chain is Ribosomal RNA large subunit methyltransferase K/L (735 aa).

A THUMP domain is found at 45 to 156; it reads DGYRACLWSR…RDSLSFSLDL (112 aa).

This sequence belongs to the methyltransferase superfamily. RlmKL family.

Its subcellular location is the cytoplasm. The catalysed reaction is guanosine(2445) in 23S rRNA + S-adenosyl-L-methionine = N(2)-methylguanosine(2445) in 23S rRNA + S-adenosyl-L-homocysteine + H(+). The enzyme catalyses guanosine(2069) in 23S rRNA + S-adenosyl-L-methionine = N(2)-methylguanosine(2069) in 23S rRNA + S-adenosyl-L-homocysteine + H(+). Specifically methylates the guanine in position 2445 (m2G2445) and the guanine in position 2069 (m7G2069) of 23S rRNA. This is Ribosomal RNA large subunit methyltransferase K/L from Allochromatium vinosum (strain ATCC 17899 / DSM 180 / NBRC 103801 / NCIMB 10441 / D) (Chromatium vinosum).